The following is a 127-amino-acid chain: Translation initiation factor 5A (127 aa).

Lys35 is subject to Hypusine.

This sequence belongs to the eIF-5A family.

It localises to the cytoplasm. Functionally, functions by promoting the formation of the first peptide bond. This chain is Translation initiation factor 5A (eIF5A), found in Methanothrix thermoacetophila (strain DSM 6194 / JCM 14653 / NBRC 101360 / PT) (Methanosaeta thermophila).